Here is a 401-residue protein sequence, read N- to C-terminus: Acetate kinase (401 aa).

Asparagine 7 lines the Mg(2+) pocket. Lysine 14 contributes to the ATP binding site. Arginine 90 contacts substrate. Aspartate 147 (proton donor/acceptor) is an active-site residue. Residues 207 to 211, 282 to 284, and 330 to 334 each bind ATP; these read HLGNG, DFR, and GVGEN. Residue glutamate 383 coordinates Mg(2+).

Belongs to the acetokinase family. As to quaternary structure, homodimer. It depends on Mg(2+) as a cofactor. The cofactor is Mn(2+).

It is found in the cytoplasm. It carries out the reaction acetate + ATP = acetyl phosphate + ADP. It functions in the pathway metabolic intermediate biosynthesis; acetyl-CoA biosynthesis; acetyl-CoA from acetate: step 1/2. Catalyzes the formation of acetyl phosphate from acetate and ATP. Can also catalyze the reverse reaction. The polypeptide is Acetate kinase (Clostridium novyi (strain NT)).